We begin with the raw amino-acid sequence, 978 residues long: Monofunctional C1-tetrahydrofolate synthase, mitochondrial (978 aa).

A compositionally biased stretch (low complexity) spans 1-10 (MGTRLPLVLR). The N-terminal 31 residues, 1-31 (MGTRLPLVLRQLRRPPQPPGPPRRLRVPCRA), are a transit peptide targeting the mitochondrion. The interval 1-71 (MGTRLPLVLR…SPGGRTPAAR (71 aa)) is disordered. The methylenetetrahydrofolate dehydrogenase and cyclohydrolase stretch occupies residues 31 to 348 (ASSGGGGGGG…REQQHRRWRL (318 aa)). The span at 33 to 45 (SGGGGGGGGGREG) shows a compositional bias: gly residues. An N6-acetyllysine; alternate modification is found at Lys189. Lys189 bears the N6-succinyllysine; alternate mark. Positions 349–978 (HCLKLQPLSP…TETEQVKGLF (630 aa)) are formyltetrahydrofolate synthetase. A Phosphoserine modification is found at Ser357. 423–430 (TPLGEGKS) contacts ATP. An N6-succinyllysine modification is found at Lys596.

This sequence in the N-terminal section; belongs to the tetrahydrofolate dehydrogenase/cyclohydrolase family. It in the C-terminal section; belongs to the formate--tetrahydrofolate ligase family. Homodimer. As to expression, detected in most tissues, highest expression found in placenta, thymus and brain. Low expression is found in liver and skeletal muscle. Up-regulated in colon adenocarcinoma.

The protein localises to the mitochondrion. The catalysed reaction is (6S)-5,6,7,8-tetrahydrofolate + formate + ATP = (6R)-10-formyltetrahydrofolate + ADP + phosphate. It participates in one-carbon metabolism; tetrahydrofolate interconversion. Functionally, may provide the missing metabolic reaction required to link the mitochondria and the cytoplasm in the mammalian model of one-carbon folate metabolism complementing thus the enzymatic activities of MTHFD2. This Homo sapiens (Human) protein is Monofunctional C1-tetrahydrofolate synthase, mitochondrial.